An 804-amino-acid polypeptide reads, in one-letter code: uncharacterized protein (804 aa).

The next 10 helical transmembrane spans lie at 15–35 (LLIVWLALSLAVACVLALGNI), 243–263 (FLLLSALLTLLLAVAAVAVAM), 301–321 (LSAVTGGAIGLLFENVLMVLL), 333–353 (SLWPWLWALGTMTVISLLVGL), 381–401 (FYLPIVSVVVVLLLAGLMGGS), 403–423 (LLWAVLAGAVVLALLCGVLGW), 453–473 (TLSQLSAFSLSFMLLALLLVL), 680–700 (ALEVMVVLVTACGMLLLLAQV), 734–754 (MLGFVSGLVAAIGAETALAVL), and 769–789 (LWIVLPCSGALLLSLFGGWLG).

It belongs to the ABC-4 integral membrane protein family.

The protein localises to the cell membrane. This is an uncharacterized protein from Escherichia coli (strain K12).